The primary structure comprises 671 residues: Transcriptional regulator Kaiso (671 aa).

The interval 1–103 is interaction with NCOR1; sequence MESRKLISAT…RADLLDELIK (103 aa). The tract at residues 1–136 is self-association; that stretch reads MESRKLISAT…SGTEQDGTAE (136 aa). The region spanning 32-94 is the BTB domain; the sequence is CDVTVIVEDR…IYSSKVVRVR (63 aa). The segment covering 127–144 has biased composition (polar residues); it reads SGTEQDGTAETLPSSSSD. A disordered region spans residues 127–161; that stretch reads SGTEQDGTAETLPSSSSDKSLDMEKSKDEAQDNGA. Residues 145 to 156 are compositionally biased toward basic and acidic residues; it reads KSLDMEKSKDEA. Glycyl lysine isopeptide (Lys-Gly) (interchain with G-Cter in SUMO2) cross-links involve residues K151 and K153. The residue at position 251 (T251) is a Phosphothreonine. Positions 298–571 are interaction with CBFA2T3; the sequence is LPNHMSSSVN…FMSSHIKSVH (274 aa). Positions 332–365 are disordered; the sequence is IIDDDDDIISSSPDSAVSNTSLVPQADNSKSTTL. The span at 347–365 shows a compositional bias: polar residues; sequence AVSNTSLVPQADNSKSTTL. Glycyl lysine isopeptide (Lys-Gly) (interchain with G-Cter in SUMO2) cross-links involve residues K388, K405, K412, and K447. Residues 451-461 are compositionally biased toward basic and acidic residues; it reads DGGEAKLDNEL. The tract at residues 451 to 474 is disordered; sequence DGGEAKLDNELPKTSGSEPPNKRM. Residues 452-671 form an interaction with CTNND1 region; the sequence is GGEAKLDNEL…EFEFIIPESY (220 aa). Residues K463, K472, and K477 each participate in a glycyl lysine isopeptide (Lys-Gly) (interchain with G-Cter in SUMO2) cross-link. The short motif at 469–478 is the Nuclear localization signal element; sequence PPNKRMKVKH. C2H2-type zinc fingers lie at residues 492 to 514, 520 to 542, and 548 to 571; these read YICI…FNIH, YQCR…EIHH, and YQCL…KSVH. The segment at 512-637 is required for DNA-binding; that stretch reads NIHSWEKKYQ…TSTPPQNKST (126 aa). Residues K537, K568, K580, K609, and K616 each participate in a glycyl lysine isopeptide (Lys-Gly) (interchain with G-Cter in SUMO2) cross-link.

In terms of assembly, interacts with NCOR1. Self-associates. Interacts with CTNND1, and this interaction inhibits binding to both methylated and non-methylated DNA. Interacts with CTNND2. Interacts with KPNA2/RCH1, which may mediate nuclear import of this protein. Interacts with CBFA2T3. In terms of tissue distribution, expressed in brain, heart, kidney, liver, lung, neuromuscular junctions, skeletal muscle, spleen and testis.

Its subcellular location is the nucleus. Transcriptional regulator with bimodal DNA-binding specificity. Binds to methylated CpG dinucleotides in the consensus sequence 5'-CGCG-3' and also binds to the non-methylated consensus sequence 5'-CTGCNA-3' also known as the consensus kaiso binding site (KBS). May recruit the N-CoR repressor complex to promote histone deacetylation and the formation of repressive chromatin structures in target gene promoters. Contributes to the repression of target genes of the Wnt signaling pathway. May also activate transcription of a subset of target genes by the recruitment of CTNND2. Represses expression of MMP7 in conjunction with transcriptional corepressors CBFA2T3, CBFA2T2 and RUNX1T1. The chain is Transcriptional regulator Kaiso (Zbtb33) from Mus musculus (Mouse).